The following is a 64-amino-acid chain: Ribosome biogenesis protein Nop10 (64 aa).

It belongs to the NOP10 family.

Its function is as follows. Involved in ribosome biogenesis; more specifically in 18S rRNA pseudouridylation and in cleavage of pre-rRNA. The sequence is that of Ribosome biogenesis protein Nop10 from Ignicoccus hospitalis (strain KIN4/I / DSM 18386 / JCM 14125).